The primary structure comprises 760 residues: Transmembrane channel-like protein 1 (760 aa).

The interval 1–80 (MSPKKVQIKV…RRRRLKRGAE (80 aa)) is disordered. Over 1–182 (MSPKKVQIKV…KIKAIESQFG (182 aa)) the chain is Cytoplasmic. Residues 13-29 (KEDETEESSSEEEEEVE) show a composition bias toward acidic residues. Residues 30 to 39 (DKLPRRESLR) show a composition bias toward basic and acidic residues. Ser-37 is subject to Phosphoserine. The residue at position 45 (Thr-45) is a Phosphothreonine. Over residues 50–61 (NEDDPEPEPEDE) the composition is skewed to acidic residues. The residue at position 128 (Ser-128) is a Phosphoserine. A helical membrane pass occupies residues 183–220 (SSVASYFLFLRWMYGVNMVLFILTFSLIMLPEYLWGLP). Residues 221–271 (YGSLPRKTVPRAEEASAANFGVLYDFNGLAQYSVLFYGYYDNKRTIGWMNF) lie on the Extracellular side of the membrane. Residues 272–303 (RLPLSYFLVGIMCIGYSFLVVLKAMTKNIGDD) traverse the membrane as a helical segment. Residues 304–359 (GGGDDNTFNFSWKVFTSWDYLIGNPETADNKFNSITMNFKEAITEEKAAQVEENVH) lie on the Cytoplasmic side of the membrane. Residue Ser-314 is modified to Phosphoserine. A helical membrane pass occupies residues 360–390 (LIRFLRFLANFFVFLTLGGSGYLIFWAVKRS). Topologically, residues 391–402 (QEFAQQDPDTLG) are extracellular. Thr-400 carries the post-translational modification Phosphothreonine. A helical transmembrane segment spans residues 403 to 430 (WWEKNEMNMVMSLLGMFCPTLFDLFAEL). Over 431-434 (EDYH) the chain is Cytoplasmic. The chain crosses the membrane as a helical span at residues 435–469 (PLIALKWLLGRIFALLLGNLYVFILALMDEINNKI). The Extracellular portion of the chain corresponds to 470-515 (EEEKLVKANITLWEANMIKAYNASFSENSTGPPFFVHPADVPRGPC). The chain crosses the membrane as a helical span at residues 516 to 553 (WETMVGQEFVRLTVSDVLTTYVTILIGDFLRACFVRFC). Over 554-572 (NYCWCWDLEYGYPSYTEFD) the chain is Cytoplasmic. Residues 573 to 593 (ISGNVLALIFNQGMIWMGSFF) traverse the membrane as a helical segment. Over 594-596 (APS) the chain is Extracellular. The chain crosses the membrane as a helical span at residues 597 to 619 (LPGINILRLHTSMYFQCWAVMCC). Over 620 to 633 (NVPEARVFKASRSN) the chain is Cytoplasmic. The chain crosses the membrane as a helical span at residues 634–657 (NFYLGMLLLILFLSTMPVLYMIVS). The Extracellular portion of the chain corresponds to 658–700 (LPPSFDCGPFSGKNRMFEVIGETLEHDFPSWMAKILRQLSNPG). Residues 701–734 (LVIAVILVMVLAIYYLNATAKGQKAANLDLKKKM) form a helical membrane-spanning segment. The Cytoplasmic portion of the chain corresponds to 735–760 (KMQALENKMRNKKMAAARAAAAAGRQ).

The protein belongs to the TMC family. In terms of assembly, forms the MET channel complosed of TMC dimer (TMC1 or TMC2), TMIE, TOMT, CIB (CIB2 or CIB3), LHFPL5 and PDH15. The interaction of TMC1 and TMC2 with TOMT is required for the transportation of TMC1/2 into the stereocilia of hair cells. Interacts (via N-terminus) with both isoforms CD1 and CD3 of PCDH15. Can form a heterodimer with TMC2, TMC5 or TMC7. As to expression, detected in fetal cochlea, and at low levels in placenta and testis.

It localises to the cell membrane. It catalyses the reaction Ca(2+)(in) = Ca(2+)(out). Pore-forming subunit of the mechanotransducer (MET) non-selective cation channel complex located at the tips of stereocilia of cochlear hair cells and that mediates sensory transduction in the auditory system. The MET complex is composed of two dimeric pore-forming ion-conducting transmembrane TMC (TMC1 or TMC2) subunits, and aided by several auxiliary proteins including LHFPL5, TMIE, CIB2/3 and TOMT, and the tip-link PCDH15. MET channel is activated by tension in the tip-link extending from the side wall of one stereocilium to the tip of the adjacent shorter stereocilium, where the channel is located. TMC1 MET channel is highly permeable to calcium and likely transports monovalent cations. Also involved in vestibular hair cells transduction current. The chain is Transmembrane channel-like protein 1 from Homo sapiens (Human).